The following is a 492-amino-acid chain: Glutamyl-tRNA(Gln) amidotransferase subunit A (492 aa).

Catalysis depends on charge relay system residues Lys-78 and Ser-158. Catalysis depends on Ser-182, which acts as the Acyl-ester intermediate.

The protein belongs to the amidase family. GatA subfamily. As to quaternary structure, heterotrimer of A, B and C subunits.

The enzyme catalyses L-glutamyl-tRNA(Gln) + L-glutamine + ATP + H2O = L-glutaminyl-tRNA(Gln) + L-glutamate + ADP + phosphate + H(+). Functionally, allows the formation of correctly charged Gln-tRNA(Gln) through the transamidation of misacylated Glu-tRNA(Gln) in organisms which lack glutaminyl-tRNA synthetase. The reaction takes place in the presence of glutamine and ATP through an activated gamma-phospho-Glu-tRNA(Gln). In Rhodopseudomonas palustris (strain ATCC BAA-98 / CGA009), this protein is Glutamyl-tRNA(Gln) amidotransferase subunit A.